A 428-amino-acid polypeptide reads, in one-letter code: Histidine--tRNA ligase (428 aa).

This sequence belongs to the class-II aminoacyl-tRNA synthetase family. As to quaternary structure, homodimer.

Its subcellular location is the cytoplasm. The enzyme catalyses tRNA(His) + L-histidine + ATP = L-histidyl-tRNA(His) + AMP + diphosphate + H(+). This is Histidine--tRNA ligase from Pseudomonas entomophila (strain L48).